The chain runs to 179 residues: NADH dehydrogenase [ubiquinone] 1 beta subcomplex subunit 9 (179 aa).

An N-acetylalanine modification is found at alanine 2. Position 85 is a phosphoserine (serine 85). A disordered region spans residues 139–160 (QLQEETPVGGPRTEALPPARKQ).

The protein belongs to the complex I LYR family. In terms of assembly, mammalian complex I is composed of 45 different subunits.

It is found in the mitochondrion inner membrane. Functionally, accessory subunit of the mitochondrial membrane respiratory chain NADH dehydrogenase (Complex I), that is believed to be not involved in catalysis. Complex I functions in the transfer of electrons from NADH to the respiratory chain. The immediate electron acceptor for the enzyme is believed to be ubiquinone. This Bos taurus (Bovine) protein is NADH dehydrogenase [ubiquinone] 1 beta subcomplex subunit 9 (NDUFB9).